We begin with the raw amino-acid sequence, 97 residues long: Large ribosomal subunit protein eL21 (97 aa).

Residues 1-26 (MQKSEGFRSKTRYKLQKHPRQKGMAP) form a disordered region. Residues 9–21 (SKTRYKLQKHPRQ) show a composition bias toward basic residues.

The protein belongs to the eukaryotic ribosomal protein eL21 family.

This chain is Large ribosomal subunit protein eL21, found in Methanococcus maripaludis (strain C5 / ATCC BAA-1333).